A 212-amino-acid polypeptide reads, in one-letter code: MNSAAPHGSSNWDPVGLGLVPMVVEQSGRGERAYDIYSRLLKERVIFLVGPVNDVTANLIVAQLLFLESENPDKDVYFYINSPGGSVSSGMAIYDTMQFIKPSVSTLCIGQAASMGSFLLAAGEKGKRFCLPNSRVMIHQPLGGFQGQASDIEIHAREILGIRAKLNEMLAKHTGQPIEQIEKDTDRDRFMSAADAVEYGIVDKVLTNRADS.

S114 acts as the Nucleophile in catalysis. The active site involves H139.

The protein belongs to the peptidase S14 family. As to quaternary structure, fourteen ClpP subunits assemble into 2 heptameric rings which stack back to back to give a disk-like structure with a central cavity, resembling the structure of eukaryotic proteasomes.

The protein localises to the cytoplasm. The enzyme catalyses Hydrolysis of proteins to small peptides in the presence of ATP and magnesium. alpha-casein is the usual test substrate. In the absence of ATP, only oligopeptides shorter than five residues are hydrolyzed (such as succinyl-Leu-Tyr-|-NHMec, and Leu-Tyr-Leu-|-Tyr-Trp, in which cleavage of the -Tyr-|-Leu- and -Tyr-|-Trp bonds also occurs).. Its function is as follows. Cleaves peptides in various proteins in a process that requires ATP hydrolysis. Has a chymotrypsin-like activity. Plays a major role in the degradation of misfolded proteins. The polypeptide is ATP-dependent Clp protease proteolytic subunit (Aromatoleum aromaticum (strain DSM 19018 / LMG 30748 / EbN1) (Azoarcus sp. (strain EbN1))).